The following is a 562-amino-acid chain: Non-homologous end joining factor IFFO1 (562 aa).

An LMNA binding region spans residues 65–116; that stretch reads ALRNDLGSNINVLKTLNLRFRCFLAKVHELERRNRLLEKQLQQALEEGKQGR. The region spanning 73–529 is the IF rod domain; that stretch reads NINVLKTLNL…RLITQSGDRK (457 aa). A coiled-coil region spans residues 85 to 117; sequence RCFLAKVHELERRNRLLEKQLQQALEEGKQGRR. Residues 154-187 are disordered; it reads RVLGSPSRSPAGPLASSAACHTSSSTSTSTAFSS. The span at 168–187 shows a compositional bias: low complexity; that stretch reads ASSAACHTSSSTSTSTAFSS. Positions 237–301 form a coiled coil; the sequence is EIRALYNVLA…MKVEQLKAEL (65 aa). A disordered region spans residues 364 to 401; the sequence is MGGRKRERKAAVEEDTSLSESDGPRQPEGAEEESTALS. An XCCR4 binding. Required for localization to the double-strand breaks (DSBs) region spans residues 453-528; it reads EQEDSLEKVI…RRLITQSGDR (76 aa). Residues 458–504 are a coiled coil; sequence LEKVIKDTESLFKTREKEYQETIDQIELELATAKNDMNRHLHEYMEM. A disordered region spans residues 523–562; that stretch reads TQSGDRKSPAFTAVPLSDPPPPPSETEDSDRDVSSDSSMR. Residues 553-562 show a composition bias toward basic and acidic residues; the sequence is RDVSSDSSMR.

This sequence belongs to the intermediate filament family. In terms of assembly, forms a heterotetramer with XRCC4. The interaction with XRCC4 is direct, involves LIG4-free XRCC4 and leads to relocalization of IFFO1 at the double-strand break (DSB) sites. Interacts with LMNA; the interaction forms an interior nucleoskeleton and the recruitment to DNA double-strand breaks.

The protein resides in the nucleus. It is found in the nucleoplasm. The protein localises to the nucleus inner membrane. Its subcellular location is the nucleus matrix. Functionally, nuclear matrix protein involved in the immobilization of broken DNA ends and the suppression of chromosome translocation during DNA double-strand breaks (DSBs). Interacts with the nuclear lamina component LMNA, resulting in the formation of a nucleoskeleton that will relocalize to the DSB sites in a XRCC4-dependent manner and promote the immobilization of the broken ends, thereby preventing chromosome translocation. Acts as a scaffold that allows the DNA repair protein XRCC4 and LMNA to assemble into a complex at the DSB sites. The sequence is that of Non-homologous end joining factor IFFO1 from Mus musculus (Mouse).